We begin with the raw amino-acid sequence, 349 residues long: Selenide, water dikinase (349 aa).

The active site involves Cys17. ATP-binding positions include Lys20 and 48–50; that span reads YFD. Position 51 (Asp51) interacts with Mg(2+). ATP-binding positions include Asp68, Asp91, and 139 to 141; that span reads GHS. Asp91 contributes to the Mg(2+) binding site. Asp229 provides a ligand contact to Mg(2+).

It belongs to the selenophosphate synthase 1 family. Class I subfamily. As to quaternary structure, homodimer. Mg(2+) is required as a cofactor.

It catalyses the reaction hydrogenselenide + ATP + H2O = selenophosphate + AMP + phosphate + 2 H(+). Its function is as follows. Synthesizes selenophosphate from selenide and ATP. This is Selenide, water dikinase from Nitrosomonas eutropha (strain DSM 101675 / C91 / Nm57).